The following is a 173-amino-acid chain: Mitochondrial holo-[acyl-carrier-protein] synthase (173 aa).

This sequence belongs to the P-Pant transferase superfamily. AcpS family.

Its subcellular location is the mitochondrion. It carries out the reaction apo-[ACP] + CoA = holo-[ACP] + adenosine 3',5'-bisphosphate + H(+). Functionally, transfers the 4'-phosphopantetheine moiety from coenzyme A to a Ser of mitochondrial acyl-carrier-protein. The sequence is that of Mitochondrial holo-[acyl-carrier-protein] synthase (PPT2) from Saccharomyces cerevisiae (strain ATCC 204508 / S288c) (Baker's yeast).